The primary structure comprises 320 residues: Short-chain dehydrogenase TIC 32 B, chloroplastic (320 aa).

Residues 40–46, 92–93, Asn-119, and Thr-140 each bind NADP(+); these read GGTSGIG and DL. Position 174 (Ser-174) interacts with substrate. The active-site Proton acceptor is the Tyr-196. An interaction with calmodulin region spans residues 301–317; that stretch reads DTTLADKLWDFSIKLVD.

The protein belongs to the short-chain dehydrogenases/reductases (SDR) family. Part of the Tic complex.

The protein resides in the plastid. It is found in the chloroplast inner membrane. Functionally, involved in protein precursor import into chloroplasts. This is Short-chain dehydrogenase TIC 32 B, chloroplastic from Brassica napus (Rape).